A 493-amino-acid chain; its full sequence is Inosine-5'-monophosphate dehydrogenase (493 aa).

2 consecutive CBS domains span residues 97-155 (VIID…NAPI) and 159-219 (MTSE…AKDE). Residues Asp253 and 303–305 (GIG) each bind NAD(+). Positions 305 and 307 each coordinate K(+). Ser308 contributes to the IMP binding site. Cys310 provides a ligand contact to K(+). The active-site Thioimidate intermediate is the Cys310. Residues 343 to 345 (DGG), 366 to 367 (GS), and 390 to 394 (YRGMG) contribute to the IMP site. Catalysis depends on Arg406, which acts as the Proton acceptor. Position 421 (Glu421) interacts with IMP. Residues Glu475, Ser476, and His477 each contribute to the K(+) site.

Belongs to the IMPDH/GMPR family. As to quaternary structure, homotetramer. It depends on K(+) as a cofactor.

It catalyses the reaction IMP + NAD(+) + H2O = XMP + NADH + H(+). The protein operates within purine metabolism; XMP biosynthesis via de novo pathway; XMP from IMP: step 1/1. Its activity is regulated as follows. Mycophenolic acid (MPA) is a non-competitive inhibitor that prevents formation of the closed enzyme conformation by binding to the same site as the amobile flap. In contrast, mizoribine monophosphate (MZP) is a competitive inhibitor that induces the closed conformation. MPA is a potent inhibitor of mammalian IMPDHs but a poor inhibitor of the bacterial enzymes. MZP is a more potent inhibitor of bacterial IMPDH. Functionally, catalyzes the conversion of inosine 5'-phosphate (IMP) to xanthosine 5'-phosphate (XMP), the first committed and rate-limiting step in the de novo synthesis of guanine nucleotides, and therefore plays an important role in the regulation of cell growth. In Streptococcus pyogenes serotype M1, this protein is Inosine-5'-monophosphate dehydrogenase.